The chain runs to 382 residues: Cell division protein FtsZ (382 aa).

GTP is bound by residues 21–25, 108–110, glutamate 139, arginine 143, and aspartate 187; these read GGGNN and GTG. A disordered region spans residues 320 to 382; the sequence is KDVTKPQRPS…TFLRNRNKRG (63 aa). Over residues 326–341 the composition is skewed to polar residues; it reads QRPSLNQSIKTHNQSV. Basic and acidic residues predominate over residues 342 to 351; it reads PKREPKREEP. The span at 352 to 365 shows a compositional bias: polar residues; it reads QQQNTVSRHTSQPA.

Belongs to the FtsZ family. In terms of assembly, homodimer. Polymerizes to form a dynamic ring structure in a strictly GTP-dependent manner. Interacts directly with several other division proteins. Interacts with FtsA. Interacts with Phi29 DNA replication protein 1. Interacts with the cell division inhibitor MciZ.

It is found in the cytoplasm. Its activity is regulated as follows. During sporulation, is negatively regulated by MciZ, which binds to FtsZ and inhibits its polymerization and the formation of the Z ring. Functionally, essential cell division protein that forms a contractile ring structure (Z ring) at the future cell division site. The regulation of the ring assembly controls the timing and the location of cell division. One of the functions of the FtsZ ring is to recruit other cell division proteins to the septum to produce a new cell wall between the dividing cells. Binds GTP and shows GTPase activity. The protein is Cell division protein FtsZ of Bacillus subtilis (strain 168).